A 165-amino-acid chain; its full sequence is Phosphopantetheine adenylyltransferase (165 aa).

Residue Ser-10 coordinates substrate. ATP-binding positions include 10 to 11 and His-18; that span reads SF. Substrate contacts are provided by Lys-42, Leu-74, and Arg-88. ATP-binding positions include 89–91, Glu-99, and 124–130; these read GLR and YSFISSS.

The protein belongs to the bacterial CoaD family. As to quaternary structure, homohexamer. Mg(2+) is required as a cofactor.

Its subcellular location is the cytoplasm. It carries out the reaction (R)-4'-phosphopantetheine + ATP + H(+) = 3'-dephospho-CoA + diphosphate. The protein operates within cofactor biosynthesis; coenzyme A biosynthesis; CoA from (R)-pantothenate: step 4/5. Its function is as follows. Reversibly transfers an adenylyl group from ATP to 4'-phosphopantetheine, yielding dephospho-CoA (dPCoA) and pyrophosphate. The chain is Phosphopantetheine adenylyltransferase from Macrococcus caseolyticus (strain JCSC5402) (Macrococcoides caseolyticum).